Here is a 407-residue protein sequence, read N- to C-terminus: Phosphopentomutase (407 aa).

Mn(2+) is bound by residues aspartate 10, aspartate 306, histidine 311, aspartate 347, histidine 348, and histidine 359.

Belongs to the phosphopentomutase family. Mn(2+) serves as cofactor.

It is found in the cytoplasm. The catalysed reaction is 2-deoxy-alpha-D-ribose 1-phosphate = 2-deoxy-D-ribose 5-phosphate. It carries out the reaction alpha-D-ribose 1-phosphate = D-ribose 5-phosphate. Its pathway is carbohydrate degradation; 2-deoxy-D-ribose 1-phosphate degradation; D-glyceraldehyde 3-phosphate and acetaldehyde from 2-deoxy-alpha-D-ribose 1-phosphate: step 1/2. In terms of biological role, isomerase that catalyzes the conversion of deoxy-ribose 1-phosphate (dRib-1-P) and ribose 1-phosphate (Rib-1-P) to deoxy-ribose 5-phosphate (dRib-5-P) and ribose 5-phosphate (Rib-5-P), respectively. The polypeptide is Phosphopentomutase (Shigella boydii serotype 18 (strain CDC 3083-94 / BS512)).